Reading from the N-terminus, the 224-residue chain is Redox-sensing transcriptional repressor Rex (224 aa).

Positions 17–56 form a DNA-binding region, H-T-H motif; it reads RYHRYLEELLKNDVKRISSRELSEKMGVTASQIRQDLNNF. 91–96 contributes to the NAD(+) binding site; sequence GAGNLG.

This sequence belongs to the transcriptional regulatory Rex family. Homodimer.

The protein resides in the cytoplasm. In terms of biological role, modulates transcription in response to changes in cellular NADH/NAD(+) redox state. The protein is Redox-sensing transcriptional repressor Rex of Thermoanaerobacter pseudethanolicus (strain ATCC 33223 / 39E) (Clostridium thermohydrosulfuricum).